The sequence spans 414 residues: Na(+)-translocating NADH-quinone reductase subunit B (414 aa).

4 consecutive transmembrane segments (helical) span residues 56–76 (IMIM…YNVG), 82–104 (ALNH…HYWL), 129–149 (FLPI…LFCM), and 164–184 (ILFA…LGIT). At threonine 236 the chain carries FMN phosphoryl threonine. Helical transmembrane passes span 275–295 (VSTL…IASW), 297–317 (IIAG…VIGS), 325–345 (MPWH…FMAT), 358–378 (WAYG…NPAY), and 381–401 (GMML…HIVI).

This sequence belongs to the NqrB/RnfD family. In terms of assembly, composed of six subunits; NqrA, NqrB, NqrC, NqrD, NqrE and NqrF. FMN is required as a cofactor.

The protein resides in the cell inner membrane. It catalyses the reaction a ubiquinone + n Na(+)(in) + NADH + H(+) = a ubiquinol + n Na(+)(out) + NAD(+). NQR complex catalyzes the reduction of ubiquinone-1 to ubiquinol by two successive reactions, coupled with the transport of Na(+) ions from the cytoplasm to the periplasm. NqrA to NqrE are probably involved in the second step, the conversion of ubisemiquinone to ubiquinol. The chain is Na(+)-translocating NADH-quinone reductase subunit B from Vibrio anguillarum (Listonella anguillarum).